Here is a 466-residue protein sequence, read N- to C-terminus: Ribulose bisphosphate carboxylase large chain (466 aa).

Lysine 5 carries the N6,N6,N6-trimethyllysine modification. 2 residues coordinate substrate: asparagine 114 and threonine 164. The active-site Proton acceptor is the lysine 166. Lysine 168 contacts substrate. The Mg(2+) site is built by lysine 192, aspartate 194, and glutamate 195. Residue lysine 192 is modified to N6-carboxylysine. Histidine 285 serves as the catalytic Proton acceptor. Substrate-binding residues include arginine 286, histidine 318, and serine 370.

Belongs to the RuBisCO large chain family. Type I subfamily. As to quaternary structure, heterohexadecamer of 8 large chains and 8 small chains; disulfide-linked. The disulfide link is formed within the large subunit homodimers. The cofactor is Mg(2+). Post-translationally, the disulfide bond which can form in the large chain dimeric partners within the hexadecamer appears to be associated with oxidative stress and protein turnover.

It localises to the plastid. It is found in the chloroplast. It catalyses the reaction 2 (2R)-3-phosphoglycerate + 2 H(+) = D-ribulose 1,5-bisphosphate + CO2 + H2O. It carries out the reaction D-ribulose 1,5-bisphosphate + O2 = 2-phosphoglycolate + (2R)-3-phosphoglycerate + 2 H(+). RuBisCO catalyzes two reactions: the carboxylation of D-ribulose 1,5-bisphosphate, the primary event in carbon dioxide fixation, as well as the oxidative fragmentation of the pentose substrate in the photorespiration process. Both reactions occur simultaneously and in competition at the same active site. The chain is Ribulose bisphosphate carboxylase large chain from Moringa oleifera (Horseradish tree).